Consider the following 217-residue polypeptide: Large ribosomal subunit protein uL29m (217 aa).

Belongs to the universal ribosomal protein uL29 family. As to quaternary structure, component of the mitochondrial large ribosomal subunit. Mature mitochondrial ribosomes consist of a small (37S) and a large (54S) subunit. The 37S subunit contains at least 33 different proteins and 1 molecule of RNA (15S). The 54S subunit contains at least 45 different proteins and 1 molecule of RNA (21S).

The protein resides in the mitochondrion. The polypeptide is Large ribosomal subunit protein uL29m (mrpl4) (Aspergillus fumigatus (strain ATCC MYA-4609 / CBS 101355 / FGSC A1100 / Af293) (Neosartorya fumigata)).